The primary structure comprises 233 residues: Cytidylate kinase (233 aa).

Residue 15–23 participates in ATP binding; the sequence is GPSGAGKSS.

The protein belongs to the cytidylate kinase family. Type 1 subfamily.

It is found in the cytoplasm. The enzyme catalyses CMP + ATP = CDP + ADP. It carries out the reaction dCMP + ATP = dCDP + ADP. The polypeptide is Cytidylate kinase (Citrifermentans bemidjiense (strain ATCC BAA-1014 / DSM 16622 / JCM 12645 / Bem) (Geobacter bemidjiensis)).